Consider the following 151-residue polypeptide: Differentiation-associated protein 2 (151 aa).

The signal sequence occupies residues Met-1–Ala-22.

It localises to the endoplasmic reticulum. The protein resides in the vacuole. Has an essential role in the initiation of differentiation. Also required for cAMP signaling. The protein is Differentiation-associated protein 2 (dia2) of Dictyostelium discoideum (Social amoeba).